Here is a 930-residue protein sequence, read N- to C-terminus: MTSRQEGASSHGSRRSSRHVGSFIIDREIGKGSFAQVYMGWHKESKAAVAIKSVELERLNKKLKENLYGEIQILKTLRHPHIVALHDCVESSTHINLIMEYCELGDLSLFIKKRDKLITHPATHDMARKYPSAPNSGLHEVVIRHFLKQLSSALEFLRAKNYVHRDVKPQNLLLLPSQAFREERALPIMEASQDSLIPISGLASLPMLKLADFGFARVLPSTSLADTLCGSPLYMAPEILRYERYDAKADLWSVGTVLYEMITGRPPFRARNHVELLRKIEAAEDVIKFPREVSVTPDLKALVRSLLKRSPVERLSFENFFAHHVVTGDILGLVEDDIPKPPKRELETIRQGEALPSSPRVQMARQLSSDPRDTRSSPKSPRSSPRSSTVNSSADAAPRRQSQNAERRLSISSHNSGQGLGIQRPAPPIQSHTAPNHPRAADRSGREPQPSSLRVARQPSDVSLTEEEKAAQDVMFERDYVVVERRHVEVNALADELAANEKLGQNNSSAKSSPLQRRYTQQGSATSTTGAIPTPASRTALVAQGRAGQDRRSSYEKALSASPGSASSAISKAIQDASLRLFGYKVNTMRQKGSSPPLYQPFPAYPTPTSAGLLSDGKGSQVSDEDAKAAQAIEEFATRSDCVYGFAEVKYKQLLPMAPSMDYGLGGVSPDKGTSEEDGLTVDATVALSEEALVLYVKSLTLLARAMDIASLWWSKKTRAESSVVSQTLVQRINAVVQWVRQRFNEVLEKSEVVRLKLTEAQKLLPEDHPSNPAHQGEDSIASSAVGAKQVYLTPGISAEKLMYDRALEMSRAAAIDEVTNENLPGCEISYLTAIRMLEAVLDSDDEATARNISSGKEIAKDATQEGSDLDTEEAAHVRKMITMITGRLNMVRKKQQMIAEANNQAKHVSAMRRLSGDVTPRSVPSYGST.

Residues 23-326 form the Protein kinase domain; sequence FIIDREIGKG…FENFFAHHVV (304 aa). ATP-binding positions include 29 to 37 and Lys52; that span reads IGKGSFAQV. The Proton acceptor role is filled by Asp166. Disordered stretches follow at residues 336 to 468, 504 to 563, 853 to 874, and 904 to 930; these read DDIP…TEEE, GQNN…SASP, ISSGKEIAKDATQEGSDLDTEE, and NQAKHVSAMRRLSGDVTPRSVPSYGST. A compositionally biased stretch (basic and acidic residues) spans 337-350; it reads DIPKPPKRELETIR. Low complexity predominate over residues 377–393; that stretch reads SPKSPRSSPRSSTVNSS. Composition is skewed to polar residues over residues 400–417 and 504–531; these read RQSQNAERRLSISSHNSG and GQNNSSAKSSPLQRRYTQQGSATSTTGA. The segment at 629-897 is ATG13-binding; sequence AAQAIEEFAT…RLNMVRKKQQ (269 aa).

The protein belongs to the protein kinase superfamily. Ser/Thr protein kinase family. APG1/unc-51/ULK1 subfamily. Homodimer. Dimerization requires the presence of ATG13. Forms a ternary complex with ATG13 and ATG17.

It localises to the cytoplasm. It is found in the preautophagosomal structure membrane. The enzyme catalyses L-seryl-[protein] + ATP = O-phospho-L-seryl-[protein] + ADP + H(+). It carries out the reaction L-threonyl-[protein] + ATP = O-phospho-L-threonyl-[protein] + ADP + H(+). Functionally, serine/threonine protein kinase involved in the cytoplasm to vacuole transport (Cvt) and found to be essential in autophagy, where it is required for the formation of autophagosomes. Involved in the clearance of protein aggregates which cannot be efficiently cleared by the proteasome. Required for selective autophagic degradation of the nucleus (nucleophagy) as well as for mitophagy which contributes to regulate mitochondrial quantity and quality by eliminating the mitochondria to a basal level to fulfill cellular energy requirements and preventing excess ROS production. Also involved in endoplasmic reticulum-specific autophagic process, in selective removal of ER-associated degradation (ERAD) substrates. Plays a key role in ATG9 and ATG23 cycling through the pre-autophagosomal structure and is necessary to promote ATG18 binding to ATG9 through phosphorylation of ATG9. Catalyzes phosphorylation of ATG4, decreasing the interaction between ATG4 and ATG8 and impairing deconjugation of PE-conjugated forms of ATG8. Contributes to conidiation by regulating the conidial levels of the conidiation-related protein CP15 and mediates fungal oxidation resistance by controlling total superoxide dismutase (SOD) activity. This Beauveria bassiana (strain ARSEF 2860) (White muscardine disease fungus) protein is Serine/threonine-protein kinase ATG1.